The sequence spans 148 residues: Ribonuclease pancreatic (148 aa).

The first 25 residues, 1 to 25 (MGLEKSLILLPLLVLVFGWVQSSLG), serve as a signal peptide directing secretion. Residues K32 and R35 each contribute to the substrate site. Residue H36 is the Proton acceptor of the active site. Disulfide bonds link C50–C108, C64–C119, C82–C134, and C89–C96. N-linked (GlcNAc...) asparagine glycosylation occurs at N58. 65-69 (KPVNT) lines the substrate pocket. N86 carries N-linked (GlcNAc...) asparagine glycosylation. Residues K90 and R109 each contribute to the substrate site. H143 serves as the catalytic Proton donor.

Belongs to the pancreatic ribonuclease family. Monomer. Interacts with and forms tight 1:1 complexes with RNH1. Dimerization of two such complexes may occur. Interaction with RNH1 inhibits this protein. In terms of tissue distribution, pancreas.

It localises to the secreted. It catalyses the reaction an [RNA] containing cytidine + H2O = an [RNA]-3'-cytidine-3'-phosphate + a 5'-hydroxy-ribonucleotide-3'-[RNA].. The enzyme catalyses an [RNA] containing uridine + H2O = an [RNA]-3'-uridine-3'-phosphate + a 5'-hydroxy-ribonucleotide-3'-[RNA].. Functionally, endonuclease that catalyzes the cleavage of RNA on the 3' side of pyrimidine nucleotides. Acts on single-stranded and double-stranded RNA. In Chionomys nivalis (European snow vole), this protein is Ribonuclease pancreatic (RNASE1).